The following is a 185-amino-acid chain: Ribosome-recycling factor (185 aa).

This sequence belongs to the RRF family.

It is found in the cytoplasm. Responsible for the release of ribosomes from messenger RNA at the termination of protein biosynthesis. May increase the efficiency of translation by recycling ribosomes from one round of translation to another. The chain is Ribosome-recycling factor from Streptococcus suis (strain 98HAH33).